Here is a 202-residue protein sequence, read N- to C-terminus: Nucleoside triphosphate pyrophosphatase (202 aa).

D79 acts as the Proton acceptor in catalysis.

Belongs to the Maf family. Requires a divalent metal cation as cofactor.

It localises to the cytoplasm. It carries out the reaction a ribonucleoside 5'-triphosphate + H2O = a ribonucleoside 5'-phosphate + diphosphate + H(+). It catalyses the reaction a 2'-deoxyribonucleoside 5'-triphosphate + H2O = a 2'-deoxyribonucleoside 5'-phosphate + diphosphate + H(+). Its function is as follows. Nucleoside triphosphate pyrophosphatase. May have a dual role in cell division arrest and in preventing the incorporation of modified nucleotides into cellular nucleic acids. This is Nucleoside triphosphate pyrophosphatase from Rhodopseudomonas palustris (strain BisB5).